The chain runs to 925 residues: Serine/threonine-protein kinase PLK4 (925 aa).

One can recognise a Protein kinase domain in the interval 12 to 265 (FKVGNLLGKG…LSSVLDHPFM (254 aa)). ATP contacts are provided by residues 18 to 26 (LGKGSFAGV) and Lys41. N6-acetyllysine occurs at positions 45 and 46. The Proton acceptor role is filled by Asp136. Disordered stretches follow at residues 262 to 283 (HPFM…EDSM) and 328 to 394 (KNSS…KTYS). The segment covering 330 to 341 (SSDFSSGDGSNF) has biased composition (low complexity). A compositionally biased stretch (polar residues) spans 342–353 (CTQWGNPEQEAN). Over residues 359–369 (RVIEDAEERPH) the composition is skewed to basic and acidic residues. Polar residues predominate over residues 381 to 391 (RASPSNQSRAK). Phosphoserine is present on Ser400. The interval 517–538 (EVMPQEPGLHPHSEQSKNRSME) is disordered. The segment covering 525–536 (LHPHSEQSKNRS) has biased composition (basic and acidic residues). Residues 547 to 660 (TLRSITSPLI…SRFIQLVRSK (114 aa)) enclose the Cryptic POLO box 1 (CPB1) domain. The 114-residue stretch at 661-774 (TPKITYFTRY…GRKPGNTSSP (114 aa)) folds into the Cryptic POLO box 2 (CPB2) domain. At Ser778 the chain carries Phosphoserine. Positions 841–919 (QLLKSVFVKN…LSSILLMFSN (79 aa)) constitute a POLO box domain.

The protein belongs to the protein kinase superfamily. Ser/Thr protein kinase family. CDC5/Polo subfamily. As to quaternary structure, homodimer. Interacts with CEP152 (via N-terminus). Interacts with CEP78; this interaction may be important for proper PLK4 localization to the centriole and PLK4-induced overduplication of centrioles. Interacts with CEP131. Interacts simultaneously with TENT5C and CEP192. Interacts with TENT5C; this interaction leads to the TENT5C recruitment in the centrosome. Interacts with CEP85; this interaction may be important in cell migration and centriole assembly. Ubiquitinated; leading to its degradation by the proteasome. Deubiquitinated by USP54; leading to PLK4 stabilization. Post-translationally, tyrosine-phosphorylated by TEC. In terms of processing, acetylation by KAT2A and KAT2B impairs kinase activity by shifting the kinase to an inactive conformation. In terms of tissue distribution, expressed in tissues associated with mitotic and meiotic cell division. Highly expressed in testis.

The protein localises to the cytoplasm. The protein resides in the cytoskeleton. It is found in the microtubule organizing center. It localises to the centrosome. Its subcellular location is the centriole. The protein localises to the nucleus. The protein resides in the nucleolus. It is found in the cleavage furrow. The catalysed reaction is L-seryl-[protein] + ATP = O-phospho-L-seryl-[protein] + ADP + H(+). It catalyses the reaction L-threonyl-[protein] + ATP = O-phospho-L-threonyl-[protein] + ADP + H(+). Functionally, serine/threonine-protein kinase that plays a central role in centriole duplication. Able to trigger procentriole formation on the surface of the parental centriole cylinder, leading to the recruitment of centriole biogenesis proteins such as SASS6, CPAP, CCP110, CEP135 and gamma-tubulin. When overexpressed, it is able to induce centrosome amplification through the simultaneous generation of multiple procentrioles adjoining each parental centriole during S phase. Phosphorylates 'Ser-151' of FBXW5 during the G1/S transition, leading to inhibit FBXW5 ability to ubiquitinate SASS6. Its central role in centriole replication suggests a possible role in tumorigenesis, centrosome aberrations being frequently observed in tumors. Phosphorylates CDC25C and CHEK2. Also involved in deuterosome-mediated centriole amplification in multiciliated that can generate more than 100 centrioles. Also involved in trophoblast differentiation by phosphorylating HAND1, leading to disrupt the interaction between HAND1 and MDFIC and activate HAND1. Required for the recruitment of STIL to the centriole and for STIL-mediated centriole amplification. Phosphorylates CEP131 at 'Ser-78' and PCM1 at 'Ser-372' which is essential for proper organization and integrity of centriolar satellites. The sequence is that of Serine/threonine-protein kinase PLK4 from Mus musculus (Mouse).